A 196-amino-acid chain; its full sequence is Probable malonic semialdehyde reductase RutE (196 aa).

It belongs to the nitroreductase family. HadB/RutE subfamily. The cofactor is FMN.

The catalysed reaction is 3-hydroxypropanoate + NADP(+) = 3-oxopropanoate + NADPH + H(+). In terms of biological role, may reduce toxic product malonic semialdehyde to 3-hydroxypropionic acid, which is excreted. The chain is Probable malonic semialdehyde reductase RutE from Escherichia coli (strain SMS-3-5 / SECEC).